A 72-amino-acid chain; its full sequence is Translation initiation factor IF-1 (72 aa).

The S1-like domain maps to 1 to 72; it reads MSNDDSIEFE…TKGRITYRMK (72 aa).

Belongs to the IF-1 family. In terms of assembly, component of the 30S ribosomal translation pre-initiation complex which assembles on the 30S ribosome in the order IF-2 and IF-3, IF-1 and N-formylmethionyl-tRNA(fMet); mRNA recruitment can occur at any time during PIC assembly.

It localises to the cytoplasm. In terms of biological role, one of the essential components for the initiation of protein synthesis. Stabilizes the binding of IF-2 and IF-3 on the 30S subunit to which N-formylmethionyl-tRNA(fMet) subsequently binds. Helps modulate mRNA selection, yielding the 30S pre-initiation complex (PIC). Upon addition of the 50S ribosomal subunit IF-1, IF-2 and IF-3 are released leaving the mature 70S translation initiation complex. The chain is Translation initiation factor IF-1 from Xanthomonas campestris pv. campestris (strain B100).